The following is a 158-amino-acid chain: Nucleoside diphosphate kinase (158 aa).

Residues Lys16, Phe64, Arg92, Thr98, Arg109, and Asn119 each coordinate ATP. His122 acts as the Pros-phosphohistidine intermediate in catalysis.

This sequence belongs to the NDK family. The cofactor is Mg(2+).

It localises to the cytoplasm. It carries out the reaction a 2'-deoxyribonucleoside 5'-diphosphate + ATP = a 2'-deoxyribonucleoside 5'-triphosphate + ADP. The catalysed reaction is a ribonucleoside 5'-diphosphate + ATP = a ribonucleoside 5'-triphosphate + ADP. Major role in the synthesis of nucleoside triphosphates other than ATP. The ATP gamma phosphate is transferred to the NDP beta phosphate via a ping-pong mechanism, using a phosphorylated active-site intermediate. This Haloquadratum walsbyi (strain DSM 16790 / HBSQ001) protein is Nucleoside diphosphate kinase.